The chain runs to 369 residues: MVNMETCAMDCCVLKALLAERAHKCLILDCRSFFSFSSCSIVGSSNVRLSTIVKRRAKGSMGLEHIVPNEEQRCRLVAGMYEAVVLLDERTSELDMLRKDSTMMLAVNALCRDSRGSSIYFLKGGYETFSAQCPEFCTKNSPPVGLSLPLCANNVPGSADSNCTPCGTPLYDQGGPVEILPFLYLGSAYHASRKDMLDTLGITALINVSANCPNHFEGHFQYKSIPVEDSHKADISSWFNEAIDFIDSVKNSGGRVFVHCQAGISRSATICLAYLMRTNRVKLDEAFEFVKQRRSIISPNFSFMGQLLQFESQVLAPSCSAEAGSPTISVLDRGTSTTTVFNFPVSIPVHSGANSLSYLQNPITTSPSC.

One can recognise a Rhodanese domain in the interval 21–138 (RAHKCLILDC…FSAQCPEFCT (118 aa)). Thr168 bears the Phosphothreonine; by MAPK1 mark. The Tyrosine-protein phosphatase domain maps to 175-316 (GPVEILPFLY…LLQFESQVLA (142 aa)). The active-site Phosphocysteine intermediate is Cys260.

Belongs to the protein-tyrosine phosphatase family. Non-receptor class dual specificity subfamily. Phosphorylated by MAPK1/ERK2 at Thr-168 and at one or more serine residues in a progesterone-dependent manner. Phosphorylation reduces its rate of degradation but does not seem to affect phosphatase activity. As to expression, expressed in XIK-2 kidney cells.

It localises to the nucleus. The enzyme catalyses O-phospho-L-seryl-[protein] + H2O = L-seryl-[protein] + phosphate. The catalysed reaction is O-phospho-L-threonyl-[protein] + H2O = L-threonyl-[protein] + phosphate. It carries out the reaction O-phospho-L-tyrosyl-[protein] + H2O = L-tyrosyl-[protein] + phosphate. Dual specificity phosphatase that dephosphorylates MAP kinase MAPK1/ERK2 on both 'Thr-188' and 'Tyr-190', regulating its activity during the meiotic cell cycle. In Xenopus laevis (African clawed frog), this protein is Dual specificity protein phosphatase 1-A.